The sequence spans 295 residues: Pyridoxal 5'-phosphate synthase subunit PdxS (295 aa).

Aspartate 25 serves as a coordination point for D-ribose 5-phosphate. Residue lysine 82 is the Schiff-base intermediate with D-ribose 5-phosphate of the active site. Glycine 154 is a D-ribose 5-phosphate binding site. Arginine 166 serves as a coordination point for D-glyceraldehyde 3-phosphate. D-ribose 5-phosphate-binding positions include glycine 215 and 236–237 (GS).

Belongs to the PdxS/SNZ family. In the presence of PdxT, forms a dodecamer of heterodimers.

It carries out the reaction aldehydo-D-ribose 5-phosphate + D-glyceraldehyde 3-phosphate + L-glutamine = pyridoxal 5'-phosphate + L-glutamate + phosphate + 3 H2O + H(+). The protein operates within cofactor biosynthesis; pyridoxal 5'-phosphate biosynthesis. In terms of biological role, catalyzes the formation of pyridoxal 5'-phosphate from ribose 5-phosphate (RBP), glyceraldehyde 3-phosphate (G3P) and ammonia. The ammonia is provided by the PdxT subunit. Can also use ribulose 5-phosphate and dihydroxyacetone phosphate as substrates, resulting from enzyme-catalyzed isomerization of RBP and G3P, respectively. This chain is Pyridoxal 5'-phosphate synthase subunit PdxS, found in Listeria monocytogenes serotype 4b (strain CLIP80459).